Here is a 178-residue protein sequence, read N- to C-terminus: Deoxycytidylate deaminase (178 aa).

In terms of domain architecture, CMP/dCMP-type deaminase spans glutamate 14–phenylalanine 145. Histidine 84 is a binding site for Zn(2+). The Proton donor role is filled by glutamate 86. Zn(2+)-binding residues include cysteine 110 and cysteine 113. Position 174 is a phosphoserine (serine 174).

It belongs to the cytidine and deoxycytidylate deaminase family. Homohexamer. Zn(2+) serves as cofactor.

It carries out the reaction dCMP + H2O + H(+) = dUMP + NH4(+). The enzyme catalyses 5-hydroxymethyl-dCMP + H2O + H(+) = 5-hydroxymethyl-dUMP + NH4(+). With respect to regulation, allosteric enzyme whose activity is greatly influenced by the end products of its metabolic pathway, dCTP and dTTP. Its function is as follows. Catalyzes the deamination of dCMP to dUMP, providing the nucleoside monophosphate substrate for the thymidylate synthase/TYMS. Also, part of a nucleotide salvage pathway that eliminates epigenetically modified 5-hydroxymethyl-dCMP (hmdCMP) in a two-step process entailing deamination to cytotoxic 5-hydroxymethyl-dUMP (hmdUMP), followed by its hydrolysis into 5-hydroxymethyluracil (hmU) and 2-deoxy-D-ribose 5-phosphate (deoxyribosephosphate). Catalyzes the first step in that pathway, the deamination of 5-hydroxymethyl-dCMP (hmdCMP). The sequence is that of Deoxycytidylate deaminase from Homo sapiens (Human).